The primary structure comprises 1395 residues: DNA-directed RNA polymerase subunit beta' (1395 aa).

Zn(2+) contacts are provided by Cys-70, Cys-72, Cys-85, and Cys-88. Mg(2+) is bound by residues Asp-461, Asp-463, and Asp-465. Zn(2+)-binding residues include Cys-815, Cys-889, Cys-896, and Cys-899.

The protein belongs to the RNA polymerase beta' chain family. The RNAP catalytic core consists of 2 alpha, 1 beta, 1 beta' and 1 omega subunit. When a sigma factor is associated with the core the holoenzyme is formed, which can initiate transcription. The cofactor is Mg(2+). It depends on Zn(2+) as a cofactor.

The enzyme catalyses RNA(n) + a ribonucleoside 5'-triphosphate = RNA(n+1) + diphosphate. Functionally, DNA-dependent RNA polymerase catalyzes the transcription of DNA into RNA using the four ribonucleoside triphosphates as substrates. The chain is DNA-directed RNA polymerase subunit beta' from Ruthia magnifica subsp. Calyptogena magnifica.